We begin with the raw amino-acid sequence, 898 residues long: MNDAECLSHLLQVCARKTEEFVRTLDSKHMVWLLEIEEEARKMFSSDFNAEPELMPKTPSQKRRRKKRTSIVPDENRDPSGRRISRRRSSANWSNSVRRLSIRNQNKTNEDSMQEEPAQPKRMTRARAQASIMCPSVVEMALPESPSQLYQKNVQVTISEQDRRSAEQKLVGSATEESEMKTDVLPVPKIAKDTISEIVNTVVPPPVPETPAVPVTPENKSRAAAKLKIAGSSTPIEAAEMVDLTCESPRPANELANEQPLNLTNQSVTPTGSKSDRRSVRRSLVVVKPSSRRSSLASQFSLASKRESMTREAVRKSIRQSIAKKKAAMETSSASSQRSCQSSIEIIDDEITIKIRPETAPSESVSEEAHTIESPRRSLRSRTFKKIAISNLPDSEEPQRRVTRQMVAMDAEPTPETTDDAQNIRRKSYKRAVDELSDDERPSEGERSPPRKKTPSPPCPPSKIVKPPPHMKSFLHTVQKNQLLMMTPGSIGKNIMMKSFIKRNTPLKMDPKEKERQRLDALRKKEEAELQRKQKIEEGKKRKQEELKLRREERLRKVLQARERVEQLEEEKKKKIEQKFAQIDEKSEKVREDRMAEEKAKKKITAKKQEEVECRRRQEEEARKLKAKQMEEEERRHQDLLQKKREEEELERQKKIAEAKRLAEQRQAEQERERQREQQLLAEKERLRAERERIEREKALQLQRELERAAQEKEQQRREAEERKKREQQERLEQERLERLHKEQEAKRLQEEQQRKAKEQAAAASAPVMNVTVDMQNSPACESYEMTPKSYKAPSVKVNEENYGMDLNSDDSTDDESQPRKPIPAWASGNLLAQAIRQQYYKPMDVDRMYGTIDSPKLEELFYKSKPRYYKRTSSAVWHSPPLSSNRHHLAVGYGLKY.

Disordered stretches follow at residues 50–127 (AEPE…TRAR), 251–282 (PANE…SVRR), 358–379 (ETAP…RRSL), 406–470 (MVAM…PPPH), 525–548 (KEEA…EELK), 564–677 (RVEQ…RQRE), 707–770 (ERAA…PVMN), and 802–824 (NYGM…KPIP). Residues 60–69 (SQKRRRKKRT) show a composition bias toward basic residues. Low complexity predominate over residues 90–99 (SANWSNSVRR). The segment covering 259–272 (QPLNLTNQSVTPTG) has biased composition (polar residues). Composition is skewed to basic and acidic residues over residues 367-376 (EEAHTIESPR) and 431-449 (RAVD…ERSP). Positions 455–470 (PSPPCPPSKIVKPPPH) are enriched in pro residues. Residues 512–730 (KEKERQRLDA…EERKKREQQE (219 aa)) are SAH. 3 stretches are compositionally biased toward basic and acidic residues: residues 564-600 (RVEQ…EEKA), 607-677 (KKQE…RQRE), and 707-759 (ERAA…KAKE). An IN box region spans residues 807 to 881 (LNSDDSTDDE…RTSSAVWHSP (75 aa)). Residues S874 and S875 each carry the phosphoserine modification.

It belongs to the INCENP family. As to quaternary structure, component of the CPC at least composed of survivin/birc5, incenp, cdca8/borealin and/or cdca9/dasra-A, and aurkb/aurora-B. Interacts (via C-terminus) with aurkb (via N-terminus and kinase domain). Interacts (via N-terminus) with birc5.1, birc5.2, cdca8 and cdca9. Interacts with mtus1.

The protein resides in the nucleus. Its subcellular location is the chromosome. It is found in the centromere. It localises to the cytoplasm. The protein localises to the cytoskeleton. The protein resides in the spindle. Its subcellular location is the midbody. It is found in the kinetochore. Its function is as follows. Component of the chromosomal passenger complex (CPC), a complex that acts as a key regulator of mitosis. The CPC complex has essential functions at the centromere in ensuring correct chromosome alignment and segregation and is required for chromatin-induced microtubule stabilization and spindle assembly. Acts as a scaffold regulating CPC localization and activity. The C-terminus associates with aurkb/aurora-B, the N-terminus associated with cdca8/borealin and/or cdca9/dasra-A tethers the CPC to the inner centromere, and the microtubule binding activity within the central SAH domain directs aurkb/aurora-B toward substrates near microtubules. Activates aurkb. This is Inner centromere protein (incenp) from Xenopus tropicalis (Western clawed frog).